A 472-amino-acid polypeptide reads, in one-letter code: MKFLIFAFFGGVHLLSLCSGKAICKNGISKRTFEEIKEEIASCGDVAKAIINLAVYGKAQNRSYERLALLVDTVGPRLSGSKNLEKAIQIMYQNLQQDGLEKVHLEPVRIPHWERGEESAVMLEPRIHKIAILGLGSSIGTPPEGITAEVLVVTSFDELQRRASEARGKIVVYNQPYINYSRTVQYRTQGAVEAAKVGALASLIRSVASFSIYSPHTGIQEYQDGVPKIPTACITVEDAEMMSRMASHGIKIVIQLKMGAKTYPDTDSFNTVAEITGSKYPEQVVLVSGHLDSWDVGQGAMDDGGGAFISWEALSLIKDLGLRPKRTLRLVLWTAEEQGGVGAFQYYQLHKVNISNYSLVMESDAGTFLPTGLQFTGSEKARAIMEEVMSLLQPLNITQVLSHGEGTDINFWIQAGVPGASLLDDLYKYFFFHHSHGDTMTVMDPKQMNVAAAVWAVVSYVVADMEEMLPRS.

The first 20 residues, 1–20 (MKFLIFAFFGGVHLLSLCSG), serve as a signal peptide directing secretion. Residues 21–44 (KAICKNGISKRTFEEIKEEIASCG) constitute a propeptide that is removed on maturation. N-linked (GlcNAc...) asparagine glycans are attached at residues asparagine 61 and asparagine 179. Zn(2+)-binding residues include histidine 290 and aspartate 302. The Nucleophile role is filled by glutamate 336. Glutamate 337 provides a ligand contact to Zn(2+). 2 N-linked (GlcNAc...) asparagine glycosylation sites follow: asparagine 353 and asparagine 356. Aspartate 364 contacts Zn(2+). Residue asparagine 396 is glycosylated (N-linked (GlcNAc...) asparagine). A Zn(2+)-binding site is contributed by histidine 434.

This sequence belongs to the peptidase M28 family. As to quaternary structure, homodimer. The monomeric form is inactive while the homodimer is active. Post-translationally, N-glycosylated. The secreted form is modified by hybrid or complex type oligosaccharide chains. Mainly detected in blood plasma. Abundant in placenta and kidney. Present at low level in muscles, liver and skin fibroblasts. Not detected in brain or white blood cells (at protein level).

The protein resides in the endoplasmic reticulum. Its subcellular location is the golgi apparatus. It is found in the lysosome. The protein localises to the secreted. Carboxypeptidase that may play an important role in the hydrolysis of circulating peptides. Catalyzes the hydrolysis of dipeptides with unsubstituted terminals into amino acids. May play a role in the liberation of thyroxine hormone from its thyroglobulin (Tg) precursor. This is Carboxypeptidase Q (CPQ) from Homo sapiens (Human).